The sequence spans 91 residues: Alpha-defensin-related sequence 12 (91 aa).

An N-terminal signal peptide occupies residues 1–19 (MKKLVLLSAFVLLAFQVQA). Positions 20–65 (DSIQNTDEEIKTEEQPGEENQAVSISFGDPEGYALQDAAIRRARRC) are excised as a propeptide. 6 consecutive repeat copies span residues 65–67 (CPP), 68–70 (CPS), 71–73 (CLS), 74–76 (CPW), 77–79 (CPR), and 83–85 (CPM). The 6 X 3 AA tandem repeats of C-P-X stretch occupies residues 65–88 (CPPCPSCLSCPWCPRCLRCPMCKC).

This sequence belongs to the alpha-defensin family. As to expression, paneth cells of the small bowel.

It is found in the secreted. Apparent precursor of a secreted, cationic, proline- and cysteine-rich peptide that contains Cys-Pro-Xaa repeats. Unlike cryptdin, the proposed mature peptide region lacks the structural motif characteristic of defensins. It may have microbicidal activities. This Mus musculus (Mouse) protein is Alpha-defensin-related sequence 12 (Defa-rs12).